Consider the following 209-residue polypeptide: Chaperone protein TorD (209 aa).

It belongs to the TorD/DmsD family. TorD subfamily.

It is found in the cytoplasm. In terms of biological role, involved in the biogenesis of TorA. Acts on TorA before the insertion of the molybdenum cofactor and, as a result, probably favors a conformation of the apoenzyme that is competent for acquiring the cofactor. The chain is Chaperone protein TorD from Shewanella baltica (strain OS185).